Consider the following 100-residue polypeptide: NADH-quinone oxidoreductase subunit K (100 aa).

3 consecutive transmembrane segments (helical) span residues 4 to 24 (VTWY…GVLL), 29 to 49 (LIVM…FLAF), and 61 to 81 (IAFF…AVVI).

This sequence belongs to the complex I subunit 4L family. As to quaternary structure, NDH-1 is composed of 14 different subunits. Subunits NuoA, H, J, K, L, M, N constitute the membrane sector of the complex.

Its subcellular location is the cell inner membrane. The enzyme catalyses a quinone + NADH + 5 H(+)(in) = a quinol + NAD(+) + 4 H(+)(out). Its function is as follows. NDH-1 shuttles electrons from NADH, via FMN and iron-sulfur (Fe-S) centers, to quinones in the respiratory chain. The immediate electron acceptor for the enzyme in this species is believed to be ubiquinone. Couples the redox reaction to proton translocation (for every two electrons transferred, four hydrogen ions are translocated across the cytoplasmic membrane), and thus conserves the redox energy in a proton gradient. This Anaeromyxobacter sp. (strain Fw109-5) protein is NADH-quinone oxidoreductase subunit K.